Here is a 382-residue protein sequence, read N- to C-terminus: Lipid-A-disaccharide synthase (382 aa).

This sequence belongs to the LpxB family.

It catalyses the reaction 2-N,3-O-bis[(3R)-3-hydroxytetradecanoyl]-alpha-D-glucosaminyl 1-phosphate + UDP-2-N,3-O-bis[(3R)-3-hydroxytetradecanoyl]-alpha-D-glucosamine = lipid A disaccharide (E. coli) + UDP + H(+). The catalysed reaction is a lipid X + a UDP-2-N,3-O-bis[(3R)-3-hydroxyacyl]-alpha-D-glucosamine = a lipid A disaccharide + UDP + H(+). It participates in glycolipid biosynthesis; lipid IV(A) biosynthesis; lipid IV(A) from (3R)-3-hydroxytetradecanoyl-[acyl-carrier-protein] and UDP-N-acetyl-alpha-D-glucosamine: step 5/6. In terms of biological role, condensation of UDP-2,3-diacylglucosamine and 2,3-diacylglucosamine-1-phosphate to form lipid A disaccharide, a precursor of lipid A, a phosphorylated glycolipid that anchors the lipopolysaccharide to the outer membrane of the cell. This Salmonella heidelberg (strain SL476) protein is Lipid-A-disaccharide synthase.